A 101-amino-acid chain; its full sequence is Urease subunit beta (101 aa).

Belongs to the urease beta subunit family. As to quaternary structure, heterotrimer of UreA (gamma), UreB (beta) and UreC (alpha) subunits. Three heterotrimers associate to form the active enzyme.

It is found in the cytoplasm. The enzyme catalyses urea + 2 H2O + H(+) = hydrogencarbonate + 2 NH4(+). It participates in nitrogen metabolism; urea degradation; CO(2) and NH(3) from urea (urease route): step 1/1. This is Urease subunit beta from Burkholderia mallei (strain NCTC 10247).